The primary structure comprises 466 residues: Soluble pyridine nucleotide transhydrogenase (466 aa).

Residue 36 to 45 (ERYHNVGGGC) coordinates FAD.

Belongs to the class-I pyridine nucleotide-disulfide oxidoreductase family. FAD is required as a cofactor.

It localises to the cytoplasm. It catalyses the reaction NAD(+) + NADPH = NADH + NADP(+). Conversion of NADPH, generated by peripheral catabolic pathways, to NADH, which can enter the respiratory chain for energy generation. The chain is Soluble pyridine nucleotide transhydrogenase from Klebsiella pneumoniae subsp. pneumoniae (strain ATCC 700721 / MGH 78578).